The chain runs to 517 residues: Apolipoprotein N-acyltransferase (517 aa).

7 consecutive transmembrane segments (helical) span residues 5-25 (SFFSLGRLLLAVPAGAIATLT), 26-46 (FAPYNYWLLAPVSIALLLWLL), 55-75 (GLIGFLWGLGLFGTGISWVHV), 90-110 (FLMSSLISYLALYPAAFGALF), 128-148 (VIWLLLDWVRGWALTGFPWLW), 162-182 (APILGVEGITLALVLISGALV), and 193-213 (LMVPVLIMALTWAANTVSWVV). The CN hydrolase domain maps to 225 to 471 (IQGNVPQELK…TAVLRATITP (247 aa)). The Proton acceptor role is filled by Glu-264. Residue Lys-330 is part of the active site. Catalysis depends on Cys-382, which acts as the Nucleophile.

Belongs to the CN hydrolase family. Apolipoprotein N-acyltransferase subfamily.

Its subcellular location is the cell inner membrane. The enzyme catalyses N-terminal S-1,2-diacyl-sn-glyceryl-L-cysteinyl-[lipoprotein] + a glycerophospholipid = N-acyl-S-1,2-diacyl-sn-glyceryl-L-cysteinyl-[lipoprotein] + a 2-acyl-sn-glycero-3-phospholipid + H(+). It participates in protein modification; lipoprotein biosynthesis (N-acyl transfer). Functionally, catalyzes the phospholipid dependent N-acylation of the N-terminal cysteine of apolipoprotein, the last step in lipoprotein maturation. This Photobacterium profundum (strain SS9) protein is Apolipoprotein N-acyltransferase.